We begin with the raw amino-acid sequence, 678 residues long: ATP-dependent RNA helicase DHX58 (678 aa).

The Helicase ATP-binding domain maps to 11–188; the sequence is IMPALEGKNI…DGAINHVLQL (178 aa). 24 to 31 contributes to the ATP binding site; it reads LPTGAGKT. The DECH box motif lies at 131 to 134; sequence DECH. The 165-residue stretch at 350 to 514 folds into the Helicase C-terminal domain; sequence KLEMLEKILQ…QAVAAVQKMD (165 aa). The stretch at 489-546 forms a coiled coil; that stretch reads ELKRELINEALETLMEQAVAAVQKMDQAEYQAKIRDLQQAALTKRAAQAAQRENQRQQ. The RLR CTR domain occupies 539 to 669; sequence QRENQRQQFP…PDFDFLQHCA (131 aa). Zn(2+) contacts are provided by C556, C559, C612, and C615. Residues 572–655 form an RNA-binding region; the sequence is VEGTHHVNVN…RIQAKKWSRV (84 aa).

Belongs to the helicase family. RLR subfamily. In terms of assembly, monomer in the absence of dsRNA. Homodimer in the presence of dsRNA. Interacts with RIGI (via CARD domain), MAVS/IPS1 and DDX60. Found in a complex with RIGI and IFIH1/MDA5. Interacts with ANKRD17. Directly interacts with ATG5 and ATG12, either as ATG5 and ATG12 monomers or as ATG12-ATG5 conjugates. As to quaternary structure, (Microbial infection) Interacts (via helicase C-terminal domain) with non-structural protein V of paramyxoviruses including human parainfluenza 2 virus, human parainfluenza 5 virus, measles virus, mumps virus, hendra virus and nipah virus. As to expression, expressed in testis, nerve and spleen. Also expressed in the brain.

It is found in the cytoplasm. The catalysed reaction is ATP + H2O = ADP + phosphate + H(+). Its function is as follows. Acts as a regulator of RIGI and IFIH1/MDA5 mediated antiviral signaling. Cannot initiate antiviral signaling as it lacks the CARD domain required for activating MAVS/IPS1-dependent signaling events. Can have both negative and positive regulatory functions related to RIGI and IFIH1/MDA5 signaling and this role in regulating signaling may be complex and could probably depend on characteristics of the infecting virus or target cells, or both. Its inhibitory action on RIG-I signaling may involve the following mechanisms: competition with RIGI for binding to the viral RNA, binding to RIGI and inhibiting its dimerization and interaction with MAVS/IPS1, competing with IKBKE in its binding to MAVS/IPS1 thereby inhibiting activation of interferon regulatory factor 3 (IRF3). Its positive regulatory role may involve unwinding or stripping nucleoproteins of viral RNA thereby facilitating their recognition by RIGI and IFIH1/MDA5. Involved in the innate immune response to various RNA viruses and some DNA viruses such as poxviruses and coronavirus SARS-CoV-2, and also to the bacterial pathogen Listeria monocytogenes. Can bind both ssRNA and dsRNA, with a higher affinity for dsRNA. Shows a preference to 5'-triphosphorylated RNA, although it can recognize RNA lacking a 5'-triphosphate. This is ATP-dependent RNA helicase DHX58 from Homo sapiens (Human).